The primary structure comprises 144 residues: Large ribosomal subunit protein uL13 (144 aa).

This sequence belongs to the universal ribosomal protein uL13 family. Part of the 50S ribosomal subunit.

Functionally, this protein is one of the early assembly proteins of the 50S ribosomal subunit, although it is not seen to bind rRNA by itself. It is important during the early stages of 50S assembly. The sequence is that of Large ribosomal subunit protein uL13 from Legionella pneumophila (strain Paris).